The following is a 109-amino-acid chain: MPNGTPTLNRPLARLALRITSCAHQGLERLIRLLHLLLHLGRSLLDLFQTLRTALTQPSTSIFSLTRLPLLLPPLRLLLLLLLPSPPRQPALASRLTQPNRPNRGRLAK.

A disordered region spans residues 89 to 109; that stretch reads QPALASRLTQPNRPNRGRLAK.

It localises to the host cytoplasm. The protein is Avian agnoprotein 2b of Psittacidae (parrots).